The chain runs to 117 residues: Large ribosomal subunit protein bL20c (117 aa).

The protein belongs to the bacterial ribosomal protein bL20 family.

The protein localises to the plastid. Its subcellular location is the chloroplast. Functionally, binds directly to 23S ribosomal RNA and is necessary for the in vitro assembly process of the 50S ribosomal subunit. It is not involved in the protein synthesizing functions of that subunit. In Calycanthus floridus var. glaucus (Eastern sweetshrub), this protein is Large ribosomal subunit protein bL20c.